The following is a 297-amino-acid chain: ABSCISIC ACID-INSENSITIVE 5-like protein 2 (297 aa).

Residues S21, S43, and S81 each carry the phosphoserine modification. Disordered stretches follow at residues 100 to 119 and 138 to 157; these read IQQN…QPTL and IPGS…SGAG. At T118 the chain carries Phosphothreonine. Residues 146–157 are compositionally biased toward gly residues; it reads PVGGGSAGSGAG. The bZIP domain occupies 225–288; it reads VERRQKRMIK…SVPPPDPKRQ (64 aa). Residues 227–246 are basic motif; sequence RRQKRMIKNRESAARSRARK. The interval 253 to 267 is leucine-zipper; that stretch reads LEIKVSRLEEENERL. The tract at residues 272–297 is disordered; that stretch reads EVEKILPSVPPPDPKRQLRRTSSAPF.

It belongs to the bZIP family. ABI5 subfamily. DNA-binding heterodimer with ABI5/DPBF1, DPBF2 or EEL/DPBF4. Interacts with the AFP proteins AFP1, AFP2, AFP3 and AFP4. Predominantly expressed in seeds.

It localises to the nucleus. In terms of biological role, binds to the embryo specification element and the ABA-responsive element (ABRE) of the Dc3 gene promoter. Could participate in abscisic acid-regulated gene expression during seed development. The chain is ABSCISIC ACID-INSENSITIVE 5-like protein 2 (DPBF3) from Arabidopsis thaliana (Mouse-ear cress).